Reading from the N-terminus, the 1148-residue chain is Trafficking protein particle complex subunit 9 (1148 aa).

A phosphoserine mark is found at Ser-566 and Ser-953.

The protein belongs to the NIBP family. As to quaternary structure, component of the multisubunit TRAPP (transport protein particle) complex, which includes at least TRAPPC2, TRAPPC2L, TRAPPC3, TRAPPC3L, TRAPPC4, TRAPPC5, TRAPPC8, TRAPPC9, TRAPPC10, TRAPPC11 and TRAPPC12. Directly interacts with IKBKB and MAP3K14. In terms of tissue distribution, expressed in neurons of the pyramidal layer of the cortex, in spinal cord motor neurons and white matter neurons (at protein level).

It is found in the golgi apparatus. Its subcellular location is the cis-Golgi network. The protein localises to the endoplasmic reticulum. The protein resides in the cytoplasm. Functions as an activator of NF-kappa-B through increased phosphorylation of the IKK complex. May function in neuronal cells differentiation. May play a role in vesicular transport from endoplasmic reticulum to Golgi. This chain is Trafficking protein particle complex subunit 9 (Trappc9), found in Mus musculus (Mouse).